A 407-amino-acid chain; its full sequence is MKFVDEVSIRVKAGDGGNGCMSFRREKFIENGGPNGGDGGDGGSVYMVADENLNTLVDYRYTRHHEAQRGSNGGSTDCTGKKGDDLFLRVPVGTTVIDASTQEVIGDLITPGQKLMVAQGGWHGLGNTRFKSSTNRAPRQTTPGKPGDQRDLKMEMKVLADVGLLGLPNAGKSTFIRSVSAAKPKVADYPFTTLVPNLGVVSVDRWKSFVIADIPGLIEGASEGAGLGIRFLKHLARTRVLLHLVDLAPLDGSSPADAAEIIINELAQFSPALVDRERWLVLNKADMIMDDEKDERVKEVVERLNWEGPVYVISAIAKQGTEKLSHDLMRYLEDRADRLANDPAYAEELAELDQRIEDEARAQLQALDDARTLRRTGVKSVHDIGDDDDWDDFEDDEDGPEIIYVRD.

The Obg domain maps to 1-159; sequence MKFVDEVSIR…RDLKMEMKVL (159 aa). The disordered stretch occupies residues 127-150; it reads NTRFKSSTNRAPRQTTPGKPGDQR. Polar residues predominate over residues 129–143; that stretch reads RFKSSTNRAPRQTTP. The 174-residue stretch at 160 to 333 folds into the OBG-type G domain; sequence ADVGLLGLPN…LSHDLMRYLE (174 aa). GTP is bound by residues 166-173, 191-195, 213-216, 283-286, and 314-316; these read GLPNAGKS, FTTLV, DIPG, NKAD, and SAI. The Mg(2+) site is built by Ser173 and Thr193. Positions 378 to 407 are disordered; the sequence is VKSVHDIGDDDDWDDFEDDEDGPEIIYVRD. Acidic residues predominate over residues 385 to 400; it reads GDDDDWDDFEDDEDGP.

The protein belongs to the TRAFAC class OBG-HflX-like GTPase superfamily. OBG GTPase family. In terms of assembly, monomer. Requires Mg(2+) as cofactor.

Its subcellular location is the cytoplasm. An essential GTPase which binds GTP, GDP and possibly (p)ppGpp with moderate affinity, with high nucleotide exchange rates and a fairly low GTP hydrolysis rate. Plays a role in control of the cell cycle, stress response, ribosome biogenesis and in those bacteria that undergo differentiation, in morphogenesis control. This chain is GTPase Obg, found in Pseudomonas entomophila (strain L48).